The sequence spans 20 residues: Conotoxin PnMLKM-D0211 (20 aa).

Residues 1–3 (VKR) constitute a propeptide that is removed on maturation. Intrachain disulfides connect C4–C18, C5–C14, and C10–C17. Residue P16 is modified to 4-hydroxyproline. W19 carries the post-translational modification Tryptophan amide.

This sequence belongs to the conotoxin M superfamily. Expressed by the venom duct.

Its subcellular location is the secreted. This chain is Conotoxin PnMLKM-D0211, found in Conus pennaceus (Feathered cone).